Here is a 413-residue protein sequence, read N- to C-terminus: MEKYTVCLCGDCINKKNFLKHCQVIDNNCYIAISNELVDIKFDEYIEHGEFFGEKFYQKSHCIMIDFENILKFNSFMADNKLFTVISHCETPCNYSRFVINYLEYITKNNIINHIKYFLKNDYFNNIRWNCHLREKIFKYSNVSTIRSCLKYLPIEYIGEYFSYSLFRGDNIILDYLVDKIKIYLTSYFTGKKYKGNMFKITNKDKLIDISNIYTRLYNIIYYNKKNENIIEIYNQIINRFQELLESQENINVKKKLIFKHNELKLKLTYNEKVKNRLLGNILVYLNGKPSLIVKQLLMDGVNIHTINRDNGFTFLDYFIKIIIKKKNLDLLDILFEMKLIDQSKLNLILEKSIPPIDFKNDTELEIDKNFIRELSGYGADVDKCFDELIKTAKYYNNNKLVGYLKNLGDDLM.

This sequence belongs to the mimivirus L17x/L18x family.

This is an uncharacterized protein from Acanthamoeba polyphaga (Amoeba).